The following is a 304-amino-acid chain: Nicotinamide/nicotinic acid mononucleotide adenylyltransferase 2 (304 aa).

Positions 16 and 17 each coordinate NAD(+). Residue His24 coordinates ATP. The NAD(+) site is built by Trp92 and Thr95. Residues Cys161 and Cys162 are each lipidated (S-palmitoyl cysteine). The NAD(+) site is built by Gly197, Asp199, Leu209, Trp210, and Arg229. 268-271 lines the ATP pocket; that stretch reads TKSR.

This sequence belongs to the eukaryotic NMN adenylyltransferase family. Monomer. Requires Mg(2+) as cofactor.

The protein localises to the golgi apparatus membrane. It is found in the cytoplasmic vesicle membrane. Its subcellular location is the cytoplasm. The protein resides in the cell projection. It localises to the axon. It catalyses the reaction beta-nicotinamide D-ribonucleotide + ATP + H(+) = diphosphate + NAD(+). The catalysed reaction is nicotinate beta-D-ribonucleotide + ATP + H(+) = deamido-NAD(+) + diphosphate. It participates in cofactor biosynthesis; NAD(+) biosynthesis; NAD(+) from nicotinamide D-ribonucleotide: step 1/1. It functions in the pathway cofactor biosynthesis; NAD(+) biosynthesis; deamido-NAD(+) from nicotinate D-ribonucleotide: step 1/1. Nicotinamide/nicotinate-nucleotide adenylyltransferase that acts as an axon maintenance factor. Axon survival factor required for the maintenance of healthy axons: acts by delaying Wallerian axon degeneration, an evolutionarily conserved process that drives the loss of damaged axons. Catalyzes the formation of NAD(+) from nicotinamide mononucleotide (NMN) and ATP. Can also use the deamidated form; nicotinic acid mononucleotide (NaMN) as substrate but with a lower efficiency. Also catalyzes the reverse reaction, i.e. the pyrophosphorolytic cleavage of NAD(+). For the pyrophosphorolytic activity prefers NAD(+), NADH and NaAD as substrates and degrades nicotinic acid adenine dinucleotide phosphate (NHD) less effectively. Also acts as an activator of ADP-ribosylation by supporting the catalytic activity of PARP16 and promoting mono-ADP-ribosylation of ribosomes by PARP16. May be involved in the maintenance of axonal integrity. This is Nicotinamide/nicotinic acid mononucleotide adenylyltransferase 2 (nmnat2) from Danio rerio (Zebrafish).